A 308-amino-acid polypeptide reads, in one-letter code: Glutaminase 2 (308 aa).

Substrate-binding residues include Ser-66, Asn-117, Glu-161, Asn-168, Tyr-192, Tyr-244, and Val-262.

The protein belongs to the glutaminase family. Homotetramer.

The catalysed reaction is L-glutamine + H2O = L-glutamate + NH4(+). This Escherichia coli O157:H7 protein is Glutaminase 2.